Consider the following 2967-residue polypeptide: BEACH domain-containing protein lvsD (2967 aa).

Disordered regions lie at residues 1-25, 322-364, 588-615, 917-936, 1077-1105, 1173-1220, 1583-1613, 1831-1859, 1921-2009, and 2029-2062; these read MSSPLKFPFKQQQQQQQQQRSRIGG, NNNN…SSNS, ILSIDPNNNNNNNNNNNNNIQQPQQQQL, NNSNNNNNNNNSNSNNNNIN, GGSNNNNNNNNNNSNNNKDKIDSNNKDKD, NTSS…SDHR, NNNSGNNNSGNNINNNNNNNNNNTNLNNNEN, QQQQQQSQQSLQLPPSPSISNAGSSSSVV, PQKT…TLNN, and KSTLTSSSSSSPSSNNNNGNSNNNSNNNNNNNKN. In terms of domain architecture, BEACH 1 spans 229 to 491; sequence MTFRKAPSSV…QDLFRKGSNY (263 aa). Positions 1079–1092 are enriched in low complexity; that stretch reads SNNNNNNNNNNSNN. Basic and acidic residues predominate over residues 1093–1105; it reads NKDKIDSNNKDKD. Low complexity-rich tracts occupy residues 1185–1194, 1583–1611, 1831–1857, 1926–1980, 1993–2006, and 2034–2062; these read PLLTSTKSMS, NNNSGNNNSGNNINNNNNNNNNNTNLNNN, QQQQQQSQQSLQLPPSPSISNAGSSSS, QNQH…SFSN, NIITTTTTTTTTST, and SSSSSSPSSNNNNGNSNNNSNNNNNNNKN. Residues 2060-2162 enclose the BEACH-type PH domain; the sequence is NKNIKLEFST…ICAQILKLIG (103 aa). 2 consecutive BEACH domains span residues 2202-2492 and 2628-2785; these read TPQQ…HPQR and NSRV…IYSN. WD repeat units lie at residues 2658 to 2710 and 2720 to 2761; these read NHKS…SDHH and GHNF…KSIQ. Disordered regions lie at residues 2798–2820 and 2915–2934; these read SATTTTTTRDDESSSSSLSSSNT and PSTSVSGDSNSNNNNNNNGN. Low complexity-rich tracts occupy residues 2811–2820 and 2924–2934; these read SSSSLSSSNT and NSNNNNNNNGN.

The sequence is that of BEACH domain-containing protein lvsD (lvsD) from Dictyostelium discoideum (Social amoeba).